The following is a 299-amino-acid chain: Taste receptor type 2 member 19 (299 aa).

Residue M1 is a topological domain, extracellular. A helical transmembrane segment spans residues 2–22 (MCFLLIILSILVVFAFVLGNF). Residues 23-55 (SNGFIALVNVIDWVNTRKISSADQILTALVVSR) lie on the Cytoplasmic side of the membrane. The chain crosses the membrane as a helical span at residues 56 to 76 (IGLLWVMLFLWYATVFNSALY). At 77 to 87 (GLEVRIVASNA) the chain is on the extracellular side. Residues 88–108 (WAVMNHFSIWLAASLSIFCLL) traverse the membrane as a helical segment. At 109–127 (KIANFSNLIFLHLKKRIKS) the chain is on the cytoplasmic side. Residues 128 to 148 (VVLVILLGPLVFLICNLAVIT) form a helical membrane-spanning segment. At 149–181 (MDERVWTKEYEGNVTWKIKLRNAIQLSSLTVTT) the chain is on the extracellular side. Residue N161 is glycosylated (N-linked (GlcNAc...) asparagine). Residues 182–202 (LANLIPFTLSLICFLLLICSL) form a helical membrane-spanning segment. Residues 203-226 (CKHLKKMRLHSKGSQDPSTKVHIK) are Cytoplasmic-facing. The chain crosses the membrane as a helical span at residues 227–247 (ALQTVTSFLMLFAIYFLCIIT). The Extracellular portion of the chain corresponds to 248 to 259 (STWNLRTQQSKL). The chain crosses the membrane as a helical span at residues 260-280 (VLLLCQTVAIMYPSFHSFILI). At 281–299 (MGSRKLKQTFLSVLWQMTR) the chain is on the cytoplasmic side.

It belongs to the G-protein coupled receptor T2R family.

It localises to the membrane. Receptor that may play a role in the perception of bitterness and is gustducin-linked. May play a role in sensing the chemical composition of the gastrointestinal content. The activity of this receptor may stimulate alpha gustducin, mediate PLC-beta-2 activation and lead to the gating of TRPM5. This Pan paniscus (Pygmy chimpanzee) protein is Taste receptor type 2 member 19 (TAS2R19).